The sequence spans 526 residues: Glycoprotein (526 aa).

Residues 1–19 form the signal peptide; the sequence is MPSQAVFLVLTTVFSQCVG. Residues 20-459 lie on the Virion surface side of the membrane; the sequence is KFPIYTIPDK…DLGLPEWKRY (440 aa). Residue N338 is glycosylated (N-linked (GlcNAc...) asparagine; by host). Residues 460 to 480 traverse the membrane as a helical segment; that stretch reads FLIGVAALTLFALTIFVVVCC. The S-palmitoyl cysteine; by host moiety is linked to residue C480. Topologically, residues 481-526 are intravirion; it reads RRVRRRERAKPNPVELIRKVSVTSQSGKVIPSWESYKVEAEGQSQA.

The protein belongs to the lyssavirus glycoprotein family. In terms of assembly, homotrimer. Interacts with matrix protein. Glycosylated and palmitoylated by host. Glycosylation is crucial for glycoprotein export at the cell surface.

It localises to the virion membrane. In terms of biological role, attaches the virus to host cellular receptor, inducing endocytosis of the virion. In the endosome, the acidic pH induces conformational changes in the glycoprotein trimer, which trigger fusion between virus and cell membrane. There is convincing in vitro evidence that the muscular form of the nicotinic acetylcholine receptor (nAChR), the neuronal cell adhesion molecule (NCAM), and the p75 neurotrophin receptor (p75NTR) bind glycoprotein and thereby facilitate rabies virus entry into cells. This Khujand virus (KHUV) protein is Glycoprotein (G).